A 436-amino-acid polypeptide reads, in one-letter code: MAKKMKLSDITNMFAGMDVEALEGVTIEGDIEIDLGGLGGGFDPMLAAALGQESAILAQHFARLAGMFGYPVGIGAPAAPAVSPALAAPKLKDLIPAKFDVANIAEWATEIQEVPIGNTSADGGSRGKRVMLGGEKALPFYFDAPMPNRNQVTIDVFDMRIGLAKAVKENYDEVMDSPGEWAKKNVEKFNADMITIHLISTDPLIKDTPAKEAAKTVEEVLQAVDVPIAIGGSGNPQKDPEVLARAAEVSEGERCLLASASLNLDYAAIAEAALKYDHDVLSWTQLDMNAQKELNRKLMKQCNVPRDRIIMDPTTAALGYGLDYAYTNMERIRLAALMGDDELTFPMSSGTTNAWGARESWMVSSPLKEDSDWGPREYRGPIWEIVTGLSLAIAGNDLFMMMHPTSVAVLKQITQTLFGMIDTEQVDVANWIGAEV.

It belongs to the CdhD family. Heterodimer of delta and gamma chains. The ACDS complex is made up of alpha, epsilon, beta, gamma and delta chains with a probable stoichiometry of (alpha(2)epsilon(2))(4)-beta(8)-(gamma(1)delta(1))(8) (Potential).

The protein operates within one-carbon metabolism; methanogenesis from acetate. Part of a complex that catalyzes the reversible cleavage of acetyl-CoA, allowing growth on acetate as sole source of carbon and energy. Probably maintains the overall quaternary structure of the ACDS complex. This is Acetyl-CoA decarbonylase/synthase complex subunit delta 2 (cdhD2) from Methanosarcina acetivorans (strain ATCC 35395 / DSM 2834 / JCM 12185 / C2A).